The sequence spans 1412 residues: Probable phosphatidylinositol 4-kinase STT4 homolog (1412 aa).

In terms of domain architecture, PIK helical spans 878 to 1055 (SMETNGFYRF…GTFVRCIEEI (178 aa)). A pleckstrin homology (PH) domain conferring phosphoinositide binding specificity region spans residues 1056–1163 (MKEMPDGSRD…ISIKQLIFKS (108 aa)). A PI3K/PI4K catalytic domain is found at 1127 to 1396 (NGSARALQSH…LIAESSQKFR (270 aa)). Residues 1133–1139 (LQSHSKV) form a G-loop region. The tract at residues 1266–1274 (NIKDRHNGN) is catalytic loop. Positions 1285–1308 (HIDFGYMLEMSPGNLNIEAPLKLT) are activation loop.

The protein belongs to the PI3/PI4-kinase family. Type III PI4K subfamily.

Its subcellular location is the cytoplasm. It carries out the reaction a 1,2-diacyl-sn-glycero-3-phospho-(1D-myo-inositol) + ATP = a 1,2-diacyl-sn-glycero-3-phospho-(1D-myo-inositol 4-phosphate) + ADP + H(+). In terms of biological role, acts on phosphatidylinositol (PI) in the first committed step in the production of the second messenger inositol 1,4,5,-trisphosphate. The polypeptide is Probable phosphatidylinositol 4-kinase STT4 homolog (STT4) (Encephalitozoon cuniculi (strain GB-M1) (Microsporidian parasite)).